Reading from the N-terminus, the 479-residue chain is Monodictyphenone cluster transcriptional coactivator mdpA (479 aa).

An HTH iclR-type domain is found at 77 to 147; sequence LAVQNQLLAC…DPGQVAHSAL (71 aa). Positions 107-126 form a DNA-binding region, H-T-H motif; sequence IKDVAELAGVPETHLSRIIR. 2 disordered regions span residues 281 to 305 and 314 to 333; these read GPTA…HKHD and TAST…TTNS. Residues 289–298 are compositionally biased toward pro residues; sequence HPNPIRPPTP. Positions 314-323 are enriched in low complexity; it reads TASTTPASSH.

The protein resides in the nucleus. Transcriptional coactivator; part of the gene cluster that mediates the biosynthesis of monodictyphenone, a prenyl xanthone derivative. With mdpE, coregulates the production of monodictyphenone. This is Monodictyphenone cluster transcriptional coactivator mdpA from Emericella nidulans (strain FGSC A4 / ATCC 38163 / CBS 112.46 / NRRL 194 / M139) (Aspergillus nidulans).